Reading from the N-terminus, the 319-residue chain is Transmembrane and ubiquitin-like domain-containing protein 2 (319 aa).

A helical membrane pass occupies residues 36–56 (VMVVAGVVVLTLALVLAWLST). Disordered stretches follow at residues 88 to 130 (VNQG…GDME) and 146 to 165 (QAGL…DSTC). Over residues 95 to 111 (PTEHPHPSGGSDDKAEE) the composition is skewed to basic and acidic residues. A Ubiquitin-like domain is found at 173-246 (INVRLKFLND…IHCHRSPPGA (74 aa)). The next 2 membrane-spanning stretches (helical) occupy residues 264–284 (LGVN…GVVW) and 293–313 (FFTA…SFLV).

The protein resides in the membrane. The chain is Transmembrane and ubiquitin-like domain-containing protein 2 (Tmub2) from Rattus norvegicus (Rat).